A 283-amino-acid chain; its full sequence is Nicotine 6-hydroxylase medium subunit (283 aa).

Positions 1 to 176 (MKLPAIRYAS…TDVWIPSRPN (176 aa)) constitute an FAD-binding PCMH-type domain. Residues 31 to 35 (AGGQS) and 110 to 114 (TLGGS) contribute to the FAD site.

Heterotrimer composed of a large subunit (NdhL), a medium subunit (NdhM) and a small subunit (NdhS). FAD serves as cofactor.

The protein localises to the cytoplasm. It catalyses the reaction (R)-nicotine + A + H2O = (R)-6-hydroxynicotine + AH2. The catalysed reaction is (S)-nicotine + A + H2O = (S)-6-hydroxynicotine + AH2. Its pathway is alkaloid degradation; nicotine degradation; 6-hydroxypseudooxynicotine from nicotine (R-isomer route): step 1/2. It participates in alkaloid degradation; nicotine degradation; 6-hydroxypseudooxynicotine from nicotine (S-isomer route): step 1/2. Its activity is regulated as follows. Nicotine dehydrogenase activity is inhibited by tungsten. Component of the nicotine 6-hydroxylase, which is involved in the degradation of nicotine. Catalyzes the hydroxylation of the pyridine ring at C6 to form 6-hydroxynicotine. Can use both L-nicotine and D-nicotine. This is Nicotine 6-hydroxylase medium subunit from Paenarthrobacter nicotinovorans (Arthrobacter nicotinovorans).